The chain runs to 340 residues: Methionyl-tRNA formyltransferase (340 aa).

Residue 110–113 (SLLP) participates in (6S)-5,6,7,8-tetrahydrofolate binding.

Belongs to the Fmt family.

It catalyses the reaction L-methionyl-tRNA(fMet) + (6R)-10-formyltetrahydrofolate = N-formyl-L-methionyl-tRNA(fMet) + (6S)-5,6,7,8-tetrahydrofolate + H(+). Its function is as follows. Attaches a formyl group to the free amino group of methionyl-tRNA(fMet). The formyl group appears to play a dual role in the initiator identity of N-formylmethionyl-tRNA by promoting its recognition by IF2 and preventing the misappropriation of this tRNA by the elongation apparatus. The chain is Methionyl-tRNA formyltransferase from Synechococcus sp. (strain WH7803).